The primary structure comprises 739 residues: TonB-dependent heme receptor A (739 aa).

The N-terminal stretch at 1–22 is a signal peptide; the sequence is MKMKKQCATLTFFIGLHGYTIA. Residues 38–150 enclose the TBDR plug domain; the sequence is GHHERQPDRS…FAGTIKLETK (113 aa). Positions 161–739 constitute a TBDR beta-barrel domain; the sequence is LLGGLLKYGY…NIKLSISKQF (579 aa).

It belongs to the TonB-dependent receptor family.

It is found in the cell outer membrane. Heme receptor. In Haemophilus ducreyi (strain 35000HP / ATCC 700724), this protein is TonB-dependent heme receptor A (tdhA).